Reading from the N-terminus, the 639-residue chain is Protein zwilch homolog (639 aa).

A compositionally biased stretch (basic and acidic residues) spans 76–95 (QKTSSLLNRRENKKTIKSEK). Positions 76-116 (QKTSSLLNRRENKKTIKSEKEDESMDMETAEGDKENTVSET) are disordered. Over residues 96 to 105 (EDESMDMETA) the composition is skewed to acidic residues.

Belongs to the ZWILCH family. Component of the RZZ complex composed of rod-1, czw-1 and zwl-1. Interacts with the spindly-like protein spdl-1. Interacts with NDC80 complex component ndc-80.

It is found in the cytoplasm. The protein localises to the cell cortex. It localises to the chromosome. The protein resides in the centromere. Its subcellular location is the kinetochore. It is found in the cytoskeleton. The protein localises to the spindle. In terms of biological role, essential component of the mitotic checkpoint, which prevents cells from prematurely exiting mitosis. Required for chromosome segregation, the assembly of the dynein-dynactin and mdf-1-mdf-2 complexes onto kinetochores and spindle pole separation. Its function related to the spindle assembly machinery and kinetochore-microtubule attachments likely depends on its association in the mitotic RZZ complex. The RZZ complex recruits the spindly-like protein spdl-1 to kinetochores. To prevent irregular chromosome segregation, the complex also inhibits the attachment of the kinetochore-associated NDC80 complex to microtubules. The recruitment of spdl-1 to kinetochores relieves this inhibition. Required for embryonic development. The protein is Protein zwilch homolog (zwl-1) of Caenorhabditis briggsae.